Reading from the N-terminus, the 145-residue chain is Putative antiporter subunit mnhG2 (145 aa).

3 helical membrane passes run 11 to 31 (IAAV…IGIV), 51 to 71 (VLLT…FFSV), and 72 to 92 (RLLL…HLVA).

It belongs to the CPA3 antiporters (TC 2.A.63) subunit G family. As to quaternary structure, may form a heterooligomeric complex that consists of seven subunits: mnhA2, mnhB2, mnhC2, mnhD2, mnhE2, mnhF2 and mnhG2.

The protein resides in the cell membrane. The chain is Putative antiporter subunit mnhG2 (mnhG2) from Staphylococcus aureus (strain COL).